A 223-amino-acid polypeptide reads, in one-letter code: Adenylate kinase (223 aa).

10 to 15 (GSGKGT) is an ATP binding site. The interval 30–59 (ESGAIFREHIGGGTELGMKAKGYIDKGELV) is NMP. Residues S31, R36, 57–59 (ELV), 84–87 (GFPR), and Q91 contribute to the AMP site. Positions 125 to 164 (GRRLCANDPNHPNNIFIDAIKPNGDKCRVCGGDLKTRSDD) are LID. ATP is bound at residue R126. 2 residues coordinate AMP: R161 and R173. G209 lines the ATP pocket.

It belongs to the adenylate kinase family. As to quaternary structure, monomer.

The protein resides in the cytoplasm. The catalysed reaction is AMP + ATP = 2 ADP. It participates in purine metabolism; AMP biosynthesis via salvage pathway; AMP from ADP: step 1/1. Catalyzes the reversible transfer of the terminal phosphate group between ATP and AMP. Plays an important role in cellular energy homeostasis and in adenine nucleotide metabolism. The polypeptide is Adenylate kinase (Solidesulfovibrio magneticus (strain ATCC 700980 / DSM 13731 / RS-1) (Desulfovibrio magneticus)).